Reading from the N-terminus, the 275-residue chain is tRNA pseudouridine synthase A (275 aa).

D62 serves as the catalytic Nucleophile. Y124 is a substrate binding site.

It belongs to the tRNA pseudouridine synthase TruA family. As to quaternary structure, homodimer.

The catalysed reaction is uridine(38/39/40) in tRNA = pseudouridine(38/39/40) in tRNA. Functionally, formation of pseudouridine at positions 38, 39 and 40 in the anticodon stem and loop of transfer RNAs. This Herminiimonas arsenicoxydans protein is tRNA pseudouridine synthase A.